A 401-amino-acid polypeptide reads, in one-letter code: Argininosuccinate synthase (401 aa).

Residues 7 to 15 (AYSGGLDTS) and Ala-34 each bind ATP. Residues Tyr-85 and Ser-90 each contribute to the L-citrulline site. Gly-115 contributes to the ATP binding site. L-aspartate is bound by residues Thr-117, Asn-121, and Asp-122. An L-citrulline-binding site is contributed by Asn-121. L-citrulline-binding residues include Arg-125, Ser-174, Ser-183, Glu-259, and Tyr-271.

The protein belongs to the argininosuccinate synthase family. Type 1 subfamily. In terms of assembly, homotetramer.

Its subcellular location is the cytoplasm. It carries out the reaction L-citrulline + L-aspartate + ATP = 2-(N(omega)-L-arginino)succinate + AMP + diphosphate + H(+). It functions in the pathway amino-acid biosynthesis; L-arginine biosynthesis; L-arginine from L-ornithine and carbamoyl phosphate: step 2/3. The sequence is that of Argininosuccinate synthase from Desulfitobacterium hafniense (strain DSM 10664 / DCB-2).